We begin with the raw amino-acid sequence, 237 residues long: Pyridoxine 5'-phosphate synthase (237 aa).

Residues Asn7 and Arg18 each contribute to the 3-amino-2-oxopropyl phosphate site. The active-site Proton acceptor is His43. 1-deoxy-D-xylulose 5-phosphate is bound by residues Arg45 and His50. The active-site Proton acceptor is the Glu70. Thr100 contributes to the 1-deoxy-D-xylulose 5-phosphate binding site. The active-site Proton donor is the His190. 3-amino-2-oxopropyl phosphate contacts are provided by residues Asp191 and 213-214 (GH).

The protein belongs to the PNP synthase family. As to quaternary structure, homooctamer; tetramer of dimers.

Its subcellular location is the cytoplasm. It catalyses the reaction 3-amino-2-oxopropyl phosphate + 1-deoxy-D-xylulose 5-phosphate = pyridoxine 5'-phosphate + phosphate + 2 H2O + H(+). The protein operates within cofactor biosynthesis; pyridoxine 5'-phosphate biosynthesis; pyridoxine 5'-phosphate from D-erythrose 4-phosphate: step 5/5. In terms of biological role, catalyzes the complicated ring closure reaction between the two acyclic compounds 1-deoxy-D-xylulose-5-phosphate (DXP) and 3-amino-2-oxopropyl phosphate (1-amino-acetone-3-phosphate or AAP) to form pyridoxine 5'-phosphate (PNP) and inorganic phosphate. This chain is Pyridoxine 5'-phosphate synthase, found in Christiangramia forsetii (strain DSM 17595 / CGMCC 1.15422 / KT0803) (Gramella forsetii).